Consider the following 313-residue polypeptide: Aspartate carbamoyltransferase catalytic subunit (313 aa).

Carbamoyl phosphate contacts are provided by Arg51 and Thr52. Residue Lys80 participates in L-aspartate binding. Carbamoyl phosphate contacts are provided by Arg101, His129, and Gln132. Residues Arg162 and Arg224 each coordinate L-aspartate. 2 residues coordinate carbamoyl phosphate: Leu263 and Pro264.

This sequence belongs to the aspartate/ornithine carbamoyltransferase superfamily. ATCase family. Heterododecamer (2C3:3R2) of six catalytic PyrB chains organized as two trimers (C3), and six regulatory PyrI chains organized as three dimers (R2).

It carries out the reaction carbamoyl phosphate + L-aspartate = N-carbamoyl-L-aspartate + phosphate + H(+). Its pathway is pyrimidine metabolism; UMP biosynthesis via de novo pathway; (S)-dihydroorotate from bicarbonate: step 2/3. Catalyzes the condensation of carbamoyl phosphate and aspartate to form carbamoyl aspartate and inorganic phosphate, the committed step in the de novo pyrimidine nucleotide biosynthesis pathway. This chain is Aspartate carbamoyltransferase catalytic subunit, found in Bacteroides thetaiotaomicron (strain ATCC 29148 / DSM 2079 / JCM 5827 / CCUG 10774 / NCTC 10582 / VPI-5482 / E50).